A 497-amino-acid polypeptide reads, in one-letter code: Probable cytosol aminopeptidase (497 aa).

Mn(2+) contacts are provided by Lys267 and Asp272. Residue Lys279 is part of the active site. Mn(2+)-binding residues include Asp290, Asp349, and Glu351. The active site involves Arg353.

This sequence belongs to the peptidase M17 family. The cofactor is Mn(2+).

Its subcellular location is the cytoplasm. The enzyme catalyses Release of an N-terminal amino acid, Xaa-|-Yaa-, in which Xaa is preferably Leu, but may be other amino acids including Pro although not Arg or Lys, and Yaa may be Pro. Amino acid amides and methyl esters are also readily hydrolyzed, but rates on arylamides are exceedingly low.. The catalysed reaction is Release of an N-terminal amino acid, preferentially leucine, but not glutamic or aspartic acids.. Functionally, presumably involved in the processing and regular turnover of intracellular proteins. Catalyzes the removal of unsubstituted N-terminal amino acids from various peptides. This chain is Probable cytosol aminopeptidase, found in Syntrophotalea carbinolica (strain DSM 2380 / NBRC 103641 / GraBd1) (Pelobacter carbinolicus).